The sequence spans 209 residues: Uracil phosphoribosyltransferase (209 aa).

5-phospho-alpha-D-ribose 1-diphosphate-binding positions include Arg79, Arg104, and Asp131–Ser139. Residues Ile194 and Gly199–Ala201 contribute to the uracil site. Residue Asp200 participates in 5-phospho-alpha-D-ribose 1-diphosphate binding.

The protein belongs to the UPRTase family. It depends on Mg(2+) as a cofactor.

It carries out the reaction UMP + diphosphate = 5-phospho-alpha-D-ribose 1-diphosphate + uracil. It functions in the pathway pyrimidine metabolism; UMP biosynthesis via salvage pathway; UMP from uracil: step 1/1. Its activity is regulated as follows. Allosterically activated by GTP. Functionally, catalyzes the conversion of uracil and 5-phospho-alpha-D-ribose 1-diphosphate (PRPP) to UMP and diphosphate. In Staphylococcus saprophyticus subsp. saprophyticus (strain ATCC 15305 / DSM 20229 / NCIMB 8711 / NCTC 7292 / S-41), this protein is Uracil phosphoribosyltransferase.